Here is a 573-residue protein sequence, read N- to C-terminus: 3-oxosteroid 1-dehydrogenase (573 aa).

7–36 (DLIVVGSGAGACWAPIRAQEQGLKTLVVEK) provides a ligand contact to FAD.

It belongs to the FAD-dependent oxidoreductase 2 family. 3-oxosteroid dehydrogenase subfamily. It depends on FAD as a cofactor.

It is found in the cell inner membrane. It carries out the reaction a 3-oxosteroid + A = a 3-oxo-Delta(1)-steroid + AH2. It functions in the pathway lipid metabolism; steroid degradation. In terms of biological role, dehydrogenates steroids by introducing a double bond in steroid ring A. The protein is 3-oxosteroid 1-dehydrogenase of Comamonas testosteroni (Pseudomonas testosteroni).